A 457-amino-acid polypeptide reads, in one-letter code: Argininosuccinate lyase (457 aa).

The protein belongs to the lyase 1 family. Argininosuccinate lyase subfamily.

It localises to the cytoplasm. The catalysed reaction is 2-(N(omega)-L-arginino)succinate = fumarate + L-arginine. It participates in amino-acid biosynthesis; L-arginine biosynthesis; L-arginine from L-ornithine and carbamoyl phosphate: step 3/3. In Psychrobacter cryohalolentis (strain ATCC BAA-1226 / DSM 17306 / VKM B-2378 / K5), this protein is Argininosuccinate lyase.